Here is a 1470-residue protein sequence, read N- to C-terminus: Collagen alpha-1(XVII) chain (1470 aa).

Disordered stretches follow at residues 1–155 (MDVT…PSTR), 167–193 (KGSRSASASPTRNTSNTLPIPKKGTVE), and 422–452 (SAENHGYDRGGGGGRGKGGGAGGGGGGGGAS). The Cytoplasmic portion of the chain corresponds to 1 to 476 (MDVTKKSKRD…CGSCCSWWKW (476 aa)). Residues 1-573 (MDVTKKSKRD…MTEQENGNLR (573 aa)) are nonhelical region (NC16). Basic and acidic residues predominate over residues 9-19 (RDGTEVTERIV). Low complexity predominate over residues 60–74 (GSSGYINSSGSIRGN). Polar residues-rich tracts occupy residues 75 to 96 (ASTSSYRRTHSPASTLPNSPGS), 111 to 120 (EGSSSGNSSP), and 170 to 184 (RSASASPTRNTSNTL). The tract at residues 146 to 231 (RLQSASPSTR…WSSTLPAGSS (86 aa)) is necessary for interaction with DST and for the recruitment of DST to hemidesmosome. Over residues 430 to 452 (RGGGGGRGKGGGAGGGGGGGGAS) the composition is skewed to gly residues. A helical; Signal-anchor for type II membrane protein membrane pass occupies residues 477–497 (LLGLLLTWLLLLGLLFGLIAL). At 498–1470 (AEEVRKLKAR…RRKRSIAIKP (973 aa)) the chain is on the extracellular side. A Phosphoserine; by CK2 modification is found at Ser551. Disordered stretches follow at residues 568–873 (ENGN…FLSS), 885–999 (GVDL…SSSG), 1159–1181 (DYRNIIGPPGPPGPPGMPGNAWS), 1194–1220 (TAGLSSIPGPPGPPGPPGPRGPPGVSA), and 1249–1298 (FIVG…TNGG). Residues 574-1456 (GSPGPKGDMG…KGEKGDKGDQ (883 aa)) are triple-helical region. Residues 597-609 (PGIPGPLGHPGPE) show a composition bias toward pro residues. 2 stretches are compositionally biased toward low complexity: residues 742–755 (EPGAKGAMGPAGAD) and 781–803 (DPGKPGLTGPQGPQGLPGSPGRP). Residues 827 to 848 (PGPPGPPGAMGPPGPPGTPGPA) show a composition bias toward pro residues. Over residues 850–873 (PAGLPGQQGPRGEPGLAGDSFLSS) the composition is skewed to low complexity. Pro residues-rich tracts occupy residues 891–914 (PPGPPGPRGPPGPSIPGPPGPRGP), 940–949 (PPGPPGPPGP), 982–992 (PPGPPGPPGPP), 1166–1175 (PPGPPGPPGM), 1201–1215 (PGPPGPPGPPGPRGP), and 1253–1262 (PPGPPGPQGP). Asn1273 carries N-linked (GlcNAc...) asparagine glycosylation. Low complexity predominate over residues 1275–1290 (SSNSSARRGTSYSSST). Residue Asn1395 is glycosylated (N-linked (GlcNAc...) asparagine). Positions 1406–1470 (TYGTIPGPPG…RRKRSIAIKP (65 aa)) are disordered. The span at 1434 to 1443 (PRGPPGPPGP) shows a compositional bias: pro residues. Basic and acidic residues predominate over residues 1446–1455 (NKGEKGDKGD). The segment at 1457–1470 (VYTGRRKRSIAIKP) is nonhelical region (NC1). The span at 1460–1470 (GRRKRSIAIKP) shows a compositional bias: basic residues.

As to quaternary structure, homotrimers of alpha 1(XVII)chains. Interacts (via cytoplasmic region) with ITGB4 (via cytoplasmic region). Interacts (via cytoplasmic region) with DST (via N-terminus). Interacts (via N-terminus) with PLEC. Interacts (via cytoplasmic region) with DSP. In terms of processing, the intracellular/endo domain is disulfide-linked. Post-translationally, prolines at the third position of the tripeptide repeating unit (G-X-Y) are hydroxylated in some or all of the chains. The ectodomain is shedded from the surface of keratinocytes resulting in a 120-kDa soluble form, also named as 120 kDa linear IgA disease antigen homolog. The shedding is mediated by membrane-bound metalloproteases. This cleavage is inhibited by phosphorylation at Ser-551.

Its subcellular location is the cell junction. The protein resides in the hemidesmosome. It is found in the membrane. The protein localises to the secreted. It localises to the extracellular space. Its subcellular location is the extracellular matrix. The protein resides in the basement membrane. In terms of biological role, may play a role in the integrity of hemidesmosome and the attachment of basal keratinocytes to the underlying basement membrane. The 120 kDa linear IgA disease antigen homolog is an anchoring filament component involved in dermal-epidermal cohesion. In Mus musculus (Mouse), this protein is Collagen alpha-1(XVII) chain (Col17a1).